The chain runs to 382 residues: MKALHFGAGNIGRGFIGKLLADAGIQLTFADVNQVVLDALNARHSYQVHVVGETEQVDTVSGVNAVSSIGDDVVDLIAQVDLVTTAVGPVVLERIAPAIAKGLVKRKEQGNESPLNIIACENMVRGTTQLKGHVMNALPEDAKAWVEEHVGFVDSAVDRIVPPSASATNDPLEVTVETFSEWIVDKTQFKGALPNIPGMELTDNLMAFVERKLFTLNTGHAITAYLGKLAGHQTIRDAILDEKIRAVVKGAMEESGAVLIKRYGFDADKHAAYIQKILGRFENPYLKDDVERVGRQPLRKLSAGDRLIKPLLGTLEYGLPHKNLIEGIAAAMHFRSEDDPQAQELAALIADKGPQAALAQISGLDANSEVVSEAVTAYKAMQ.

3 to 14 contacts NAD(+); that stretch reads ALHFGAGNIGRG. Position 269 is an N6-acetyllysine (lysine 269).

This sequence belongs to the mannitol dehydrogenase family.

It carries out the reaction D-mannitol 1-phosphate + NAD(+) = beta-D-fructose 6-phosphate + NADH + H(+). The chain is Mannitol-1-phosphate 5-dehydrogenase from Escherichia coli O81 (strain ED1a).